An 885-amino-acid polypeptide reads, in one-letter code: Alanine--tRNA ligase (885 aa).

The span at 426-444 (QEQKTRARQDRREKQRGGA) shows a compositional bias: basic and acidic residues. A disordered region spans residues 426–445 (QEQKTRARQDRREKQRGGAE). Zn(2+) contacts are provided by His-568, His-572, Cys-671, and His-675.

Belongs to the class-II aminoacyl-tRNA synthetase family. Zn(2+) is required as a cofactor.

It is found in the cytoplasm. The catalysed reaction is tRNA(Ala) + L-alanine + ATP = L-alanyl-tRNA(Ala) + AMP + diphosphate. Catalyzes the attachment of alanine to tRNA(Ala) in a two-step reaction: alanine is first activated by ATP to form Ala-AMP and then transferred to the acceptor end of tRNA(Ala). Also edits incorrectly charged Ser-tRNA(Ala) and Gly-tRNA(Ala) via its editing domain. This is Alanine--tRNA ligase from Chlorobium phaeovibrioides (strain DSM 265 / 1930) (Prosthecochloris vibrioformis (strain DSM 265)).